The following is a 190-amino-acid chain: Adenylate kinase (190 aa).

11-16 (GAGKGT) provides a ligand contact to ATP. Residues 31–60 (STGDIFRFNLKNDTELGKQARVFMDNGELV) form an NMP region. AMP is bound by residues T32, R37, 58 to 60 (ELV), 86 to 89 (GYPR), and Q93. The LID stretch occupies residues 127–137 (ERGKTSGRADD). R128 contacts ATP. AMP contacts are provided by R134 and R146. G174 serves as a coordination point for ATP.

Belongs to the adenylate kinase family. In terms of assembly, monomer.

The protein localises to the cytoplasm. It catalyses the reaction AMP + ATP = 2 ADP. It functions in the pathway purine metabolism; AMP biosynthesis via salvage pathway; AMP from ADP: step 1/1. Functionally, catalyzes the reversible transfer of the terminal phosphate group between ATP and AMP. Plays an important role in cellular energy homeostasis and in adenine nucleotide metabolism. The protein is Adenylate kinase of Flavobacterium johnsoniae (strain ATCC 17061 / DSM 2064 / JCM 8514 / BCRC 14874 / CCUG 350202 / NBRC 14942 / NCIMB 11054 / UW101) (Cytophaga johnsonae).